The sequence spans 212 residues: Methylthioribulose-1-phosphate dehydratase (212 aa).

The Zn(2+) site is built by H97 and H99.

Belongs to the aldolase class II family. MtnB subfamily. Homotetramer. Requires Zn(2+) as cofactor.

It carries out the reaction 5-(methylsulfanyl)-D-ribulose 1-phosphate = 5-methylsulfanyl-2,3-dioxopentyl phosphate + H2O. It functions in the pathway amino-acid biosynthesis; L-methionine biosynthesis via salvage pathway; L-methionine from S-methyl-5-thio-alpha-D-ribose 1-phosphate: step 2/6. Functionally, catalyzes the dehydration of methylthioribulose-1-phosphate (MTRu-1-P) into 2,3-diketo-5-methylthiopentyl-1-phosphate (DK-MTP-1-P). The sequence is that of Methylthioribulose-1-phosphate dehydratase from Bacillus cereus (strain AH187).